A 130-amino-acid chain; its full sequence is Small ribosomal subunit protein uS9 (130 aa).

The disordered stretch occupies residues 109 to 130 (RAKERKKYGLKAARRAPQFSKR). Residues 111 to 130 (KERKKYGLKAARRAPQFSKR) show a composition bias toward basic residues.

It belongs to the universal ribosomal protein uS9 family.

This chain is Small ribosomal subunit protein uS9, found in Heliobacterium modesticaldum (strain ATCC 51547 / Ice1).